The following is a 422-amino-acid chain: GTPase Obg (422 aa).

Residues 4 to 161 (LHFVDEAFNE…FKIKTELKVL (158 aa)) form the Obg domain. Residues 162-327 (ADIGLLGFPS…LKYEMSSLLQ (166 aa)) enclose the OBG-type G domain. GTP contacts are provided by residues 168–175 (GFPSVGKS), 193–197 (FTTIK), 214–217 (DLPG), 281–284 (NKMD), and 308–310 (SLV). Positions 175 and 195 each coordinate Mg(2+). The region spanning 345–422 (TLPDNQNTIS…KICDRLFYFL (78 aa)) is the OCT domain.

It belongs to the TRAFAC class OBG-HflX-like GTPase superfamily. OBG GTPase family. In terms of assembly, monomer. Requires Mg(2+) as cofactor.

The protein resides in the cytoplasm. Its function is as follows. An essential GTPase which binds GTP, GDP and possibly (p)ppGpp with moderate affinity, with high nucleotide exchange rates and a fairly low GTP hydrolysis rate. Plays a role in control of the cell cycle, stress response, ribosome biogenesis and in those bacteria that undergo differentiation, in morphogenesis control. In Onion yellows phytoplasma (strain OY-M), this protein is GTPase Obg.